A 410-amino-acid polypeptide reads, in one-letter code: Cytochrome P450 105A3 (410 aa).

C359 is a heme binding site.

It belongs to the cytochrome P450 family. As to quaternary structure, monomer. Requires heme as cofactor.

Catalyzes the hydroxylation of sodium ML-236B carboxylate to pravastatin. In Streptomyces carbophilus, this protein is Cytochrome P450 105A3 (cyp105A3).